A 449-amino-acid polypeptide reads, in one-letter code: Probable magnetosome protein Mms48 (449 aa).

The signal sequence occupies residues 1–18; that stretch reads MLLRLIVLLIFMSPVVFA. Residues 40–60 form a helical membrane-spanning segment; it reads SNMPVLLAVILVVFLIFSALS. The TPR repeat unit spans residues 323–356; it reads PDGHLAAGEAAFAVQKWGVARRHIMAALKIAPDA.

The protein localises to the magnetosome membrane. Overexpression in wild-type cells increases the number of cells with double magnetosome chains significantly. The 4 genes of this operon collectively influence magnetosome size and number. The sequence is that of Probable magnetosome protein Mms48 from Magnetospirillum gryphiswaldense (strain DSM 6361 / JCM 21280 / NBRC 15271 / MSR-1).